Reading from the N-terminus, the 565-residue chain is Methionine--tRNA ligase (565 aa).

The 'HIGH' region signature appears at 16 to 26 (PYAYGVPHLGN). Residues C148, C151, C161, and C164 each coordinate Zn(2+). Positions 338–342 (KFSKS) match the 'KMSKS' region motif. Residue K341 participates in ATP binding.

Belongs to the class-I aminoacyl-tRNA synthetase family. MetG type 1 subfamily. Zn(2+) is required as a cofactor.

It is found in the cytoplasm. The enzyme catalyses tRNA(Met) + L-methionine + ATP = L-methionyl-tRNA(Met) + AMP + diphosphate. Its function is as follows. Is required not only for elongation of protein synthesis but also for the initiation of all mRNA translation through initiator tRNA(fMet) aminoacylation. This Thermofilum pendens (strain DSM 2475 / Hrk 5) protein is Methionine--tRNA ligase.